Consider the following 108-residue polypeptide: Tetrahydromethanopterin S-methyltransferase subunit B (108 aa).

Residues 79–99 (GMFFGFWVTMAILVLVTILAV) form a helical membrane-spanning segment.

This sequence belongs to the MtrB family. The complex is composed of 8 subunits; MtrA, MtrB, MtrC, MtrD, MtrE, MtrF, MtrG and MtrH.

The protein localises to the cell membrane. The enzyme catalyses 5-methyl-5,6,7,8-tetrahydromethanopterin + coenzyme M + 2 Na(+)(in) = 5,6,7,8-tetrahydromethanopterin + methyl-coenzyme M + 2 Na(+)(out). It functions in the pathway one-carbon metabolism; methanogenesis from CO(2); methyl-coenzyme M from 5,10-methylene-5,6,7,8-tetrahydromethanopterin: step 2/2. Its function is as follows. Part of a complex that catalyzes the formation of methyl-coenzyme M and tetrahydromethanopterin from coenzyme M and methyl-tetrahydromethanopterin. This is an energy-conserving, sodium-ion translocating step. In Methanococcus maripaludis (strain C5 / ATCC BAA-1333), this protein is Tetrahydromethanopterin S-methyltransferase subunit B.